The following is a 150-amino-acid chain: UPF0756 membrane protein YE1142 (150 aa).

Transmembrane regions (helical) follow at residues 1–21, 51–71, 88–108, and 114–134; these read MAAL…GIIS, YGLT…IASG, ILAI…VSLM, and VVAG…GVPV.

It belongs to the UPF0756 family.

Its subcellular location is the cell membrane. In Yersinia enterocolitica serotype O:8 / biotype 1B (strain NCTC 13174 / 8081), this protein is UPF0756 membrane protein YE1142.